We begin with the raw amino-acid sequence, 489 residues long: MNKPASIGLLQQPKPFFMIFFVELWERFGYYGVQGILAVYFVHKLGFSQEQAFTTFGAFAALVYGLIAIGGYVGDHLLGTKRTIVLGAIVLTVGYFMTGLSILKPELIFYALGTIAVGNGLFKANPASLLSKCYPPKDPRLDGAFTLFYMSINIGSLFSLAIAPVIAEKFGYAVTYNICGIGLIIALLVYVLYRNTVRNIGSEPDHRPINYKNLLLVLAGTVTMVFVCAWLMHNVKIANIVLIGLSVVIVFIFFREAFKQDKVGRNKMFVAFILMLQAIVFFILYAQMPTSLNFFAINNVHHQLLGFNINPVSFQALNPFWIVVASPILAALYTHWGSRSKDLTMPAKFTVGMFLCSLGFLTAAAAGLWFADEQGLTSPWFIVLVYLFQSLGELMISALGLAMVAALVPQYLMGFILGMWYLTQATSFLLGGYVAAFTAIPEGITDPLETLPVYTNVFGKIGITTFIVAIIMAITVPLLNRMMNGKQKA.

The Cytoplasmic portion of the chain corresponds to 1 to 27 (MNKPASIGLLQQPKPFFMIFFVELWER). Residues 28–48 (FGYYGVQGILAVYFVHKLGFS) form a helical membrane-spanning segment. Topologically, residues 49–52 (QEQA) are periplasmic. The chain crosses the membrane as a helical span at residues 53-73 (FTTFGAFAALVYGLIAIGGYV). The Cytoplasmic portion of the chain corresponds to 74 to 82 (GDHLLGTKR). The chain crosses the membrane as a helical span at residues 83–103 (TIVLGAIVLTVGYFMTGLSIL). Over 104 to 106 (KPE) the chain is Periplasmic. The chain crosses the membrane as a helical span at residues 107–127 (LIFYALGTIAVGNGLFKANPA). Over 128 to 146 (SLLSKCYPPKDPRLDGAFT) the chain is Cytoplasmic. Residues 147–167 (LFYMSINIGSLFSLAIAPVIA) traverse the membrane as a helical segment. Residues 168–171 (EKFG) lie on the Periplasmic side of the membrane. A helical membrane pass occupies residues 172–192 (YAVTYNICGIGLIIALLVYVL). The Cytoplasmic segment spans residues 193–212 (YRNTVRNIGSEPDHRPINYK). 2 helical membrane passes run 213–233 (NLLL…WLMH) and 234–254 (NVKI…FIFF). The Cytoplasmic portion of the chain corresponds to 255 to 267 (REAFKQDKVGRNK). Residues 268-288 (MFVAFILMLQAIVFFILYAQM) traverse the membrane as a helical segment. Residues 289–311 (PTSLNFFAINNVHHQLLGFNINP) are Periplasmic-facing. The helical transmembrane segment at 312 to 332 (VSFQALNPFWIVVASPILAAL) threads the bilayer. Topologically, residues 333 to 350 (YTHWGSRSKDLTMPAKFT) are cytoplasmic. The chain crosses the membrane as a helical span at residues 351 to 371 (VGMFLCSLGFLTAAAAGLWFA). The Periplasmic portion of the chain corresponds to 372 to 375 (DEQG). Residues 376–396 (LTSPWFIVLVYLFQSLGELMI) form a helical membrane-spanning segment. Residues 397-419 (SALGLAMVAALVPQYLMGFILGM) lie on the Cytoplasmic side of the membrane. The chain crosses the membrane as a helical span at residues 420–440 (WYLTQATSFLLGGYVAAFTAI). Topologically, residues 441–456 (PEGITDPLETLPVYTN) are periplasmic. A helical transmembrane segment spans residues 457–477 (VFGKIGITTFIVAIIMAITVP). At 478–489 (LLNRMMNGKQKA) the chain is on the cytoplasmic side.

The protein belongs to the major facilitator superfamily. Proton-dependent oligopeptide transporter (POT/PTR) (TC 2.A.17) family. DtpB subfamily.

It is found in the cell inner membrane. Functionally, proton-dependent permease that transports di- and tripeptides. The sequence is that of Dipeptide and tripeptide permease B from Photorhabdus asymbiotica subsp. asymbiotica (strain ATCC 43949 / 3105-77) (Xenorhabdus luminescens (strain 2)).